Consider the following 331-residue polypeptide: C4-dicarboxylate-binding periplasmic protein DctP (331 aa).

A signal peptide spans 1–23; the sequence is MLKHTAKALVCALSLTVAGIVQA.

The protein belongs to the bacterial solute-binding protein 7 family. The complex comprises the extracytoplasmic solute receptor protein DctP, and the two transmembrane proteins DctQ and DctM.

It is found in the periplasm. Functionally, part of the tripartite ATP-independent periplasmic (TRAP) transport system DctPQM involved in C4-dicarboxylates uptake. In Pseudomonas aeruginosa (strain ATCC 15692 / DSM 22644 / CIP 104116 / JCM 14847 / LMG 12228 / 1C / PRS 101 / PAO1), this protein is C4-dicarboxylate-binding periplasmic protein DctP.